The following is a 599-amino-acid chain: Elongation factor 4 (599 aa).

One can recognise a tr-type G domain in the interval 2–184 (KNIRNFSIIA…RLVRDIPPPQ (183 aa)). Residues 14–19 (DHGKST) and 131–134 (NKID) contribute to the GTP site.

It belongs to the TRAFAC class translation factor GTPase superfamily. Classic translation factor GTPase family. LepA subfamily.

Its subcellular location is the cell inner membrane. It carries out the reaction GTP + H2O = GDP + phosphate + H(+). Functionally, required for accurate and efficient protein synthesis under certain stress conditions. May act as a fidelity factor of the translation reaction, by catalyzing a one-codon backward translocation of tRNAs on improperly translocated ribosomes. Back-translocation proceeds from a post-translocation (POST) complex to a pre-translocation (PRE) complex, thus giving elongation factor G a second chance to translocate the tRNAs correctly. Binds to ribosomes in a GTP-dependent manner. In Salmonella paratyphi C (strain RKS4594), this protein is Elongation factor 4.